The sequence spans 221 residues: Small ribosomal subunit protein uS2 (221 aa).

The disordered stretch occupies residues 202-221 (KVKMPQQNQRGRPQRRFQRR).

The protein belongs to the universal ribosomal protein uS2 family.

The polypeptide is Small ribosomal subunit protein uS2 (Methanococcus vannielii (strain ATCC 35089 / DSM 1224 / JCM 13029 / OCM 148 / SB)).